Consider the following 126-residue polypeptide: Major sperm protein 2 (126 aa).

An N-acetylalanine modification is found at Ala-2. Residues 8 to 125 form the MSP domain; that stretch reads DIATMPNQKV…RRKNLPIEYN (118 aa).

In terms of tissue distribution, sperm.

The protein resides in the cell projection. The protein localises to the pseudopodium. It localises to the cytoplasm. It is found in the cytoskeleton. Functionally, central component in molecular interactions underlying sperm crawling. Forms an extensive filament system that extends from sperm villipoda, along the leading edge of the pseudopod. This is Major sperm protein 2 (MSP-2) from Globodera rostochiensis (Golden nematode worm).